We begin with the raw amino-acid sequence, 102 residues long: Nuclear protein 2 (102 aa).

2 disordered regions span residues Met1–Thr26 and Pro46–Ala102. A compositionally biased stretch (basic residues) spans Gln85–Ala102.

It belongs to the NUPR family.

The protein resides in the nucleus. Its function is as follows. Acts as a transcriptional repressor by inhibiting gene expression at the NUPR1 promoter in a p53/TP53-dependent manner in cancer cells. Involved in the G1 cell cycle arrest, and in a decrease in cell viability and cell proliferation of pancreatic cancer cells. Plays a role as a negative regulator of the protumoral factor NUPR1. The polypeptide is Nuclear protein 2 (Mus musculus (Mouse)).